The sequence spans 335 residues: NADH-quinone oxidoreductase subunit H (335 aa).

8 helical membrane passes run 12–32 (IIAVVKAIVVLLAVVVCGALL), 81–101 (VIFTLAPVVAMSALLIAFAVI), 114–134 (IGLLFFFAMAGLSVYAVLFAG), 154–174 (VSYEVFMGLALMGIVVQVGSF), 187–207 (LWFIIPQFFGFCTFFIAGVAV), 238–258 (FFVGEYIGIILISALLVTLFF), 270–290 (SLAFFWFALKTAFFIMLFILL), and 307–327 (WKFCLPLTLINLLVTAAIVLL).

This sequence belongs to the complex I subunit 1 family. NDH-1 is composed of 13 different subunits. Subunits NuoA, H, J, K, L, M, N constitute the membrane sector of the complex.

Its subcellular location is the cell inner membrane. It catalyses the reaction a quinone + NADH + 5 H(+)(in) = a quinol + NAD(+) + 4 H(+)(out). Functionally, NDH-1 shuttles electrons from NADH, via FMN and iron-sulfur (Fe-S) centers, to quinones in the respiratory chain. The immediate electron acceptor for the enzyme in this species is believed to be ubiquinone. Couples the redox reaction to proton translocation (for every two electrons transferred, four hydrogen ions are translocated across the cytoplasmic membrane), and thus conserves the redox energy in a proton gradient. This subunit may bind ubiquinone. This chain is NADH-quinone oxidoreductase subunit H, found in Pseudomonas syringae pv. syringae (strain B728a).